An 876-amino-acid chain; its full sequence is Leucine--tRNA ligase (876 aa).

A 'HIGH' region motif is present at residues 42 to 52; it reads PYPSGKLHMGH. The 'KMSKS' region signature appears at 634–638; that stretch reads KMSKS. Lysine 637 serves as a coordination point for ATP.

This sequence belongs to the class-I aminoacyl-tRNA synthetase family.

It is found in the cytoplasm. It catalyses the reaction tRNA(Leu) + L-leucine + ATP = L-leucyl-tRNA(Leu) + AMP + diphosphate. The polypeptide is Leucine--tRNA ligase (Neisseria meningitidis serogroup B (strain ATCC BAA-335 / MC58)).